A 702-amino-acid chain; its full sequence is Kinesin-like protein KIF3A (702 aa).

Residues 14-345 (NVKVVVRCRP…LRYANRAKNI (332 aa)) form the Kinesin motor domain. Position 100–107 (100–107 (GQTGTGKT)) interacts with ATP. A coiled-coil region spans residues 355–593 (PKDALLRQFQ…LSRELRLQML (239 aa)). Disordered stretches follow at residues 372–424 (KKLE…KMIE) and 667–702 (LMKL…SLLQ). A compositionally biased stretch (acidic residues) spans 376 to 400 (EGEEISGSDISGSEEDDDEEGEIGE). Residues 410–424 (DQAGKKKVSPDKMIE) are compositionally biased toward basic and acidic residues. The segment at 600–702 (PRDYQEMIEN…PETVIDSLLQ (103 aa)) is globular. The span at 675-690 (TSKGKARPKTGRRKRS) shows a compositional bias: basic residues. S690 carries the phosphoserine modification.

Belongs to the TRAFAC class myosin-kinesin ATPase superfamily. Kinesin family. Kinesin II subfamily. In terms of assembly, heterodimer of KIF3A and KIF3B. Interacts with CIMAP3. Interacts with CLN3. Interacts with DCTN1. Interacts with FLCN. Interacts with AP3B1.

The protein resides in the cytoplasm. The protein localises to the cytoskeleton. It localises to the cell projection. It is found in the cilium. Its subcellular location is the microtubule organizing center. The protein resides in the centrosome. The protein localises to the centriole. In terms of biological role, microtubule-based anterograde translocator for membranous organelles. Plus end-directed microtubule sliding activity in vitro. Plays a role in primary cilia formation. Plays a role in centriole cohesion and subdistal appendage organization and function. Regulates the formation of the subdistal appendage via recruitment of DCTN1 to the centriole. Also required for ciliary basal feet formation and microtubule anchoring to mother centriole. The polypeptide is Kinesin-like protein KIF3A (KIF3A) (Pongo abelii (Sumatran orangutan)).